We begin with the raw amino-acid sequence, 138 residues long: U1 small nuclear ribonucleoprotein C (138 aa).

A Matrin-type zinc finger spans residues 4–36 (FYCDYCDTYLTHDSPSVRKTHCSGRKHKENVRD). The residue at position 8 (Tyr8) is a Phosphotyrosine. Residue Ser17 is modified to Phosphoserine. At Lys52 the chain carries N6-acetyllysine. The tract at residues 62-99 (IPPNLFSAPPLGGPMIPPPHPSMMGPPPPGMMPVGPPP) is disordered. A compositionally biased stretch (pro residues) spans 72-99 (LGGPMIPPPHPSMMGPPPPGMMPVGPPP).

Belongs to the U1 small nuclear ribonucleoprotein C family. Component of the U1 snRNP. The U1 snRNP is composed of the U1 snRNA and the 7 core Sm proteins SNRPB, SNRPD1, SNRPD2, SNRPD3, SNRPE, SNRPF and SNRPG that assemble in a heptameric protein ring on the Sm site of the small nuclear RNA to form the core snRNP, and at least 3 U1 snRNP-specific proteins SNRNP70/U1-70K, SNRPA/U1-A and SNRPC/U1-C. SNRPC/U1-C interacts with U1 snRNA and the 5' splice-site region of the pre-mRNA. Interacts (via N-terminus) with TIA1 (via C-terminus); thereby promoting spliceosomal U1 snRNP recruitment to 5' splice sites.

The protein resides in the nucleus. Its function is as follows. Component of the spliceosomal U1 snRNP, which is essential for recognition of the pre-mRNA 5' splice-site and the subsequent assembly of the spliceosome. SNRPC/U1-C is directly involved in initial 5' splice-site recognition for both constitutive and regulated alternative splicing. The interaction with the 5' splice-site seems to precede base-pairing between the pre-mRNA and the U1 snRNA. Stimulates commitment or early (E) complex formation by stabilizing the base pairing of the 5' end of the U1 snRNA and the 5' splice-site region. In Monodelphis domestica (Gray short-tailed opossum), this protein is U1 small nuclear ribonucleoprotein C.